A 49-amino-acid polypeptide reads, in one-letter code: Thymopoietin-1 (49 aa).

The region spanning 4 to 47 (LEDPSVLTKEKLKSELVANNVTLPAGEQRKDVYVELYLQHLTAL) is the LEM-like domain. Residues 32 to 36 (RKDVY) are biological activity.

The protein belongs to the thymopoietin family.

Its function is as follows. Hormone of the thymus with pleiotropic actions on prothymocytes, mature T-cells, the nicotinic acetylcholine receptor, and pituitary corticotrophs. The sequence is that of Thymopoietin-1 from Bos taurus (Bovine).